Reading from the N-terminus, the 990-residue chain is Mediator of RNA polymerase II transcription subunit 5 (990 aa).

The protein belongs to the Mediator complex subunit 5 family. In terms of assembly, component of the Mediator complex.

The protein resides in the nucleus. Functionally, component of the Mediator complex, a coactivator involved in the regulated transcription of nearly all RNA polymerase II-dependent genes. Mediator functions as a bridge to convey information from gene-specific regulatory proteins to the basal RNA polymerase II transcription machinery. Mediator is recruited to promoters by direct interactions with regulatory proteins and serves as a scaffold for the assembly of a functional preinitiation complex with RNA polymerase II and the general transcription factors. This is Mediator of RNA polymerase II transcription subunit 5 (NUT1) from Debaryomyces hansenii (strain ATCC 36239 / CBS 767 / BCRC 21394 / JCM 1990 / NBRC 0083 / IGC 2968) (Yeast).